The sequence spans 319 residues: FAD-dependent oxidoreductase FVFD30 (319 aa).

The FAD site is built by Arg-6, Asp-18, and Lys-25. Positions 129 and 188 each coordinate NAD(+). 2 residues coordinate NADP(+): Lys-129 and Gly-188. Residues Asp-228 and Tyr-265 each contribute to the FAD site. Asp-228 contacts 6-hydroxy-FAD. Tyr-265 serves as a coordination point for NAD(+). Residue Tyr-265 coordinates NADP(+). Residues 281 to 301 (GVGYFGVWWGIVIGGWLASLL) form a helical membrane-spanning segment.

This sequence belongs to the FAD-dependent oxidoreductase family.

The protein localises to the membrane. Functionally, probable FAD-dependent oxidoreductase that plays a role in the regulation of fruiting body development. The protein is FAD-dependent oxidoreductase FVFD30 of Flammulina velutipes (Agaricus velutipes).